A 511-amino-acid chain; its full sequence is Maturase K (511 aa).

The protein belongs to the intron maturase 2 family. MatK subfamily.

Its subcellular location is the plastid. It localises to the chloroplast. Functionally, usually encoded in the trnK tRNA gene intron. Probably assists in splicing its own and other chloroplast group II introns. The sequence is that of Maturase K from Trifolium burchellianum (Wild clover).